Reading from the N-terminus, the 225-residue chain is Endoglucanase (225 aa).

The N-terminal stretch at 1–15 (MKVFVVLAAIVAIAN) is a signal peptide. D29 acts as the Nucleophile in catalysis. Cystine bridges form between C30-C152, C31-C66, C35-C103, C50-C74, C104-C219, C106-C209, and C176-C187. An N-linked (GlcNAc...) asparagine glycan is attached at N55. D138 (proton donor) is an active-site residue.

Belongs to the glycosyl hydrolase 45 (cellulase K) family. Post-translationally, N- and O-glycosylated. Contains hybrid- and complex-type N-glycans.

It is found in the secreted. The catalysed reaction is Endohydrolysis of (1-&gt;4)-beta-D-glucosidic linkages in cellulose, lichenin and cereal beta-D-glucans.. With respect to regulation, activity is not affected by metal ions except Mn(2+), which reduces the activity by 40-50%. However, no significant change in activity in response to 1 mM EDTA. Hydrolyzes carboxymethylcellulose (CMC). Also hydrolyzes lichenan and barley beta-1,4-D-glucan. CMC is hydrolyzed majorily to cellobiose (G2), cellotriose (G3) and cellotetraose (G4). Cellohexaose (G6) is hydrolyzed to G4 and G2 with traces of G3. Cellopentaose (G5) is completely hydrolyzed to G2 and G3, and G4 is partially hydrolyzed to G2. Does not hydrolyze G2 or G3. Does not hydrolyze crystalline cellulose, soluble starch, xylan, mannan or laminarin. The sequence is that of Endoglucanase from Cryptopygus antarcticus (Antarctic springtail).